The chain runs to 404 residues: MLKCKQPGARFIHGAVHLPSGQIVFHTIHSPTLASALGLPGENVPIPALFRASGLNVRESLPMTNMRAPIISLARLILAPNPYILEGQLTVGMTQDNGIPVLFARPVIEVKSGPESNIKASSQLMIAEDSCLNQIAPFSASEHPAFSMVESVKRVRVDEGANTRRTIRDILEIPVTVLSSLQLSPTKSILKKAPEPPPPEPQATFDATPYARIFYDIGRQVPKLGNAPAAQVSNVLIANRSHNSLRLVPNPDLLPLQHLYLKHVVLKSLNLENIVQDFEAIFTSPSDTISEAETKAFEKLVEQAKNTVENIVFCLNSICSTSTLPDVVPDVNNPNISLALEKYFLMFPPSGTIMRNVRFATPIVRLLCQGAELGTMAQFLGKYIKVKKETGMYTLVKLYYLLRI.

The protein belongs to the lymphocryptovirus BTRF1 family.

This is an uncharacterized protein from Epstein-Barr virus (strain GD1) (HHV-4).